The sequence spans 505 residues: MFS-type transporter oryN (505 aa).

The interval 1–54 (MAVAELPNIVSTDSSPSPHPGSRLSSEPTDIESQKAPSNAEPKTDPNLVTWDGP) is disordered. A run of 13 helical transmembrane segments spans residues 69–89 (AFVT…SSIF), 106–126 (VVTL…PVWG), 135–155 (KWPM…VAVA), 166–186 (FLTG…LVDM), 193–213 (GVAM…APLM), 226–246 (FTQW…VFGL), 280–300 (GIKD…VTEP), 301–321 (ILLL…LVFV), 337–357 (ISAL…AIVV), 376–396 (LPLM…FAWT), 401–421 (IHWA…YMVF), 440–460 (IGAN…FGPF), and 468–488 (AWAS…PVLF).

This sequence belongs to the major facilitator superfamily. CAR1 family.

The protein resides in the membrane. MFS-type transporter; part of the gene cluster that mediates the biosynthesis of oryzines, natural products with an unusual maleidride backbone. The sequence is that of MFS-type transporter oryN from Aspergillus oryzae (strain ATCC 42149 / RIB 40) (Yellow koji mold).